Here is a 254-residue protein sequence, read N- to C-terminus: tRNA pseudouridine synthase A (254 aa).

Asp52 functions as the Nucleophile in the catalytic mechanism. Tyr110 is a substrate binding site.

It belongs to the tRNA pseudouridine synthase TruA family. As to quaternary structure, homodimer.

It carries out the reaction uridine(38/39/40) in tRNA = pseudouridine(38/39/40) in tRNA. Functionally, formation of pseudouridine at positions 38, 39 and 40 in the anticodon stem and loop of transfer RNAs. The chain is tRNA pseudouridine synthase A from Thermodesulfovibrio yellowstonii (strain ATCC 51303 / DSM 11347 / YP87).